Reading from the N-terminus, the 334-residue chain is uncharacterized protein (334 aa).

The protein belongs to the PAPS reductase family.

This is an uncharacterized protein from Escherichia phage 186 (Bacteriophage 186).